The primary structure comprises 215 residues: Large ribosomal subunit protein eL15 (215 aa).

The disordered stretch occupies residues 179 to 215 (GTVKHKWKKKEKEREQKKRHEATKYYRLQNYDKLPGK). Residues 188 to 202 (KEKEREQKKRHEATK) show a composition bias toward basic and acidic residues.

Belongs to the eukaryotic ribosomal protein eL15 family.

The chain is Large ribosomal subunit protein eL15 from Sulfurisphaera tokodaii (strain DSM 16993 / JCM 10545 / NBRC 100140 / 7) (Sulfolobus tokodaii).